A 324-amino-acid polypeptide reads, in one-letter code: Aspartate carbamoyltransferase catalytic subunit (324 aa).

Residues R55 and T56 each coordinate carbamoyl phosphate. K83 serves as a coordination point for L-aspartate. 3 residues coordinate carbamoyl phosphate: R105, H135, and Q138. Residues R173 and R227 each coordinate L-aspartate. G268 and P269 together coordinate carbamoyl phosphate.

This sequence belongs to the aspartate/ornithine carbamoyltransferase superfamily. ATCase family. As to quaternary structure, heterododecamer (2C3:3R2) of six catalytic PyrB chains organized as two trimers (C3), and six regulatory PyrI chains organized as three dimers (R2).

It catalyses the reaction carbamoyl phosphate + L-aspartate = N-carbamoyl-L-aspartate + phosphate + H(+). The protein operates within pyrimidine metabolism; UMP biosynthesis via de novo pathway; (S)-dihydroorotate from bicarbonate: step 2/3. In terms of biological role, catalyzes the condensation of carbamoyl phosphate and aspartate to form carbamoyl aspartate and inorganic phosphate, the committed step in the de novo pyrimidine nucleotide biosynthesis pathway. The protein is Aspartate carbamoyltransferase catalytic subunit of Nocardioides sp. (strain ATCC BAA-499 / JS614).